We begin with the raw amino-acid sequence, 916 residues long: Translation initiation factor IF-2 (916 aa).

The interval 1–325 (MTDSNDDKTL…QEKFRRSQVQ (325 aa)) is disordered. A compositionally biased stretch (low complexity) spans 60–91 (ITPATPAAPVRAAEPAPAPAQARPQQSTPAPR). A compositionally biased stretch (polar residues) spans 97-108 (GQANQRPQQSYQ). The segment covering 125–182 (SPEEMDARRRALAESQARDAQDAIRRAEEEKRRAAEEAVRKAAEAEEAARRAVEEAAR) has biased composition (basic and acidic residues). Composition is skewed to low complexity over residues 183 to 209 (QAEA…AEAR) and 229 to 243 (DGAA…PAAV). Residues 414-581 (SRPPVVTIMG…AVLLQAEILD (168 aa)) form the tr-type G domain. The segment at 423 to 430 (GHVDHGKT) is G1. 423–430 (GHVDHGKT) contacts GTP. A G2 region spans residues 448–452 (GITQH). The interval 469-472 (DTPG) is G3. GTP is bound by residues 469–473 (DTPGH) and 523–526 (NKID). The G4 stretch occupies residues 523–526 (NKID). The interval 559 to 561 (SAK) is G5.

The protein belongs to the TRAFAC class translation factor GTPase superfamily. Classic translation factor GTPase family. IF-2 subfamily.

Its subcellular location is the cytoplasm. In terms of biological role, one of the essential components for the initiation of protein synthesis. Protects formylmethionyl-tRNA from spontaneous hydrolysis and promotes its binding to the 30S ribosomal subunits. Also involved in the hydrolysis of GTP during the formation of the 70S ribosomal complex. This is Translation initiation factor IF-2 from Rhizobium etli (strain ATCC 51251 / DSM 11541 / JCM 21823 / NBRC 15573 / CFN 42).